Here is a 233-residue protein sequence, read N- to C-terminus: UPF0173 metal-dependent hydrolase Igni_1254 (233 aa).

This sequence belongs to the UPF0173 family.

The polypeptide is UPF0173 metal-dependent hydrolase Igni_1254 (Ignicoccus hospitalis (strain KIN4/I / DSM 18386 / JCM 14125)).